The chain runs to 360 residues: S-adenosylmethionine-dependent nucleotide dehydratase RSAD2 (360 aa).

Positions 44–71 (KGQPRVRGEPKETQETHEDPGSAQPTTP) are disordered. Residues 49–63 (VRGEPKETQETHEDP) are compositionally biased toward basic and acidic residues. The region spanning 68 to 288 (PTTPVSVNYH…LQRHKDVSCL (221 aa)) is the Radical SAM core domain. Residues Cys-82, Cys-86, and Cys-89 each coordinate [4Fe-4S] cluster. Lys-196 is subject to N6-acetyllysine. Residue Lys-205 forms a Glycyl lysine isopeptide (Lys-Gly) (interchain with G-Cter in ubiquitin) linkage.

This sequence belongs to the radical SAM superfamily. RSAD2 family. As to quaternary structure, homodimer. Interacts with IRAK1 and TRAF6. Interacts with FPPS. Interacts with HADHB. Interacts (via C-terminus) with VAPA/VAP33 (via C-terminus). [4Fe-4S] cluster is required as a cofactor. In terms of processing, acetylated by HAT1. HAT1-mediated acetylation of Lys-196 in turn recruits UBE4A that stimulates RSAD2 polyubiquitination leading to proteasomal degradation. Post-translationally, 'Lys-6'-linked polyubiquitination at Lys-205 leads to RSAD2 protein degradation. In neonatal rat tibia, specifically localized in cells of the periosteum, in osteoblasts lining endosteal and peristeal bone surfaces, to articular surfaces of cartilage and in perichondral cells but not in chondrocytes (at protein level). Expressed predominantly in bone marrow and spleen.

It localises to the endoplasmic reticulum membrane. It is found in the golgi apparatus. The protein localises to the endoplasmic reticulum. Its subcellular location is the lipid droplet. The protein resides in the mitochondrion. It localises to the mitochondrion inner membrane. It is found in the mitochondrion outer membrane. It catalyses the reaction CTP + AH2 + S-adenosyl-L-methionine = 3'-deoxy-3',4'-didehydro-CTP + 5'-deoxyadenosine + L-methionine + A + H2O + H(+). With respect to regulation, IRAK1 and TRAF6 synergistically activate RSAD2 increasing its activity with CTP as substrate about 10-fold. Its function is as follows. Interferon-inducible antiviral protein which plays a major role in the cell antiviral state induced by type I and type II interferon. Catalyzes the conversion of cytidine triphosphate (CTP) to 3'-deoxy-3',4'-didehydro-CTP (ddhCTP) via a SAM-dependent radical mechanism. In turn, ddhCTP acts as a chain terminator for the RNA-dependent RNA polymerases from multiple viruses and directly inhibits viral replication. Therefore, inhibits a wide range of DNA and RNA viruses. Also promotes TLR7 and TLR9-dependent production of IFN-beta production in plasmacytoid dendritic cells (pDCs) by facilitating 'Lys-63'-linked ubiquitination of IRAK1 by TRAF6. Plays a role in CD4+ T-cells activation and differentiation. Facilitates T-cell receptor (TCR)-mediated GATA3 activation and optimal T-helper 2 (Th2) cytokine production by modulating NFKB1 and JUNB activities. Can inhibit secretion of soluble proteins. In Rattus norvegicus (Rat), this protein is S-adenosylmethionine-dependent nucleotide dehydratase RSAD2.